A 337-amino-acid chain; its full sequence is LIX1-like protein (337 aa).

A disordered region spans residues 1–55; the sequence is METMRAQRLQPGVGVGGRGTLRALRPGVTGAPTSAATPPVGPPPAPPPPAPPLPP. Over residues 26 to 38 the composition is skewed to low complexity; sequence PGVTGAPTSAATP. The span at 39–55 shows a compositional bias: pro residues; the sequence is PVGPPPAPPPPAPPLPP.

The protein belongs to the LIX1 family.

This chain is LIX1-like protein (Lix1l), found in Mus musculus (Mouse).